A 549-amino-acid polypeptide reads, in one-letter code: ATP synthase subunit alpha (549 aa).

172 to 179 contributes to the ATP binding site; sequence GDRKTGKT.

It belongs to the ATPase alpha/beta chains family. F-type ATPases have 2 components, CF(1) - the catalytic core - and CF(0) - the membrane proton channel. CF(1) has five subunits: alpha(3), beta(3), gamma(1), delta(1), epsilon(1). CF(0) has three main subunits: a(1), b(2) and c(9-12). The alpha and beta chains form an alternating ring which encloses part of the gamma chain. CF(1) is attached to CF(0) by a central stalk formed by the gamma and epsilon chains, while a peripheral stalk is formed by the delta and b chains.

Its subcellular location is the cell membrane. The enzyme catalyses ATP + H2O + 4 H(+)(in) = ADP + phosphate + 5 H(+)(out). Functionally, produces ATP from ADP in the presence of a proton gradient across the membrane. The alpha chain is a regulatory subunit. The protein is ATP synthase subunit alpha of Mycobacterium tuberculosis (strain CDC 1551 / Oshkosh).